The sequence spans 289 residues: ATP synthase subunit a (289 aa).

6 consecutive transmembrane segments (helical) span residues 43-63 (AFHLDTLGWSVALGLIFLLIF), 103-123 (VIAPLALTIFVWVFLMNAVDL), 160-180 (FCVFALIIFYSIKVKGLGGFI), 193-213 (IFVQILLIPVNFLLEFVTLIA), 232-252 (VFILIAVMFGSGLLWLSGLGV), and 259-279 (AVFHILIITLQAFIFMMLTIV).

Belongs to the ATPase A chain family. F-type ATPases have 2 components, CF(1) - the catalytic core - and CF(0) - the membrane proton channel. CF(1) has five subunits: alpha(3), beta(3), gamma(1), delta(1), epsilon(1). CF(0) has three main subunits: a(1), b(2) and c(9-12). The alpha and beta chains form an alternating ring which encloses part of the gamma chain. CF(1) is attached to CF(0) by a central stalk formed by the gamma and epsilon chains, while a peripheral stalk is formed by the delta and b chains.

It localises to the cell inner membrane. Functionally, key component of the proton channel; it plays a direct role in the translocation of protons across the membrane. This Pseudomonas putida (strain ATCC 700007 / DSM 6899 / JCM 31910 / BCRC 17059 / LMG 24140 / F1) protein is ATP synthase subunit a.